An 88-amino-acid polypeptide reads, in one-letter code: Small ribosomal subunit protein uS15 (88 aa).

It belongs to the universal ribosomal protein uS15 family. Part of the 30S ribosomal subunit. Forms a bridge to the 50S subunit in the 70S ribosome, contacting the 23S rRNA.

Functionally, one of the primary rRNA binding proteins, it binds directly to 16S rRNA where it helps nucleate assembly of the platform of the 30S subunit by binding and bridging several RNA helices of the 16S rRNA. In terms of biological role, forms an intersubunit bridge (bridge B4) with the 23S rRNA of the 50S subunit in the ribosome. The protein is Small ribosomal subunit protein uS15 of Borreliella afzelii (strain PKo) (Borrelia afzelii).